We begin with the raw amino-acid sequence, 632 residues long: Basic helix-loop-helix ARNT-like protein 1 (632 aa).

Positions 1–39 are disordered; that stretch reads MADQRMDISSTISDFMSPGPTDLLSGSLGTSGVDCNRKR. Ser17 is modified (phosphoserine; by GSK3-beta). Thr21 carries the post-translational modification Phosphothreonine; by GSK3-beta. A Nuclear localization signal motif is present at residues 36-41; that stretch reads NRKRKG. The region spanning 79–132 is the bHLH domain; sequence NAREAHSQIEKRRRDKMNSFIDELASLVPTCNAMSRKLDKLTVLRMAVQHMKTL. The residue at position 85 (Ser85) is a Phosphoserine. Phosphoserine; by CK2 is present on Ser97. The short motif at 149-159 is the Nuclear export signal 1 element; the sequence is LSDDELKHLIL. Positions 150–222 constitute a PAS 1 domain; the sequence is SDDELKHLIL…EQLSSSDTAP (73 aa). A Glycyl lysine isopeptide (Lys-Gly) (interchain with G-Cter in SUMO2 and SUMO3) cross-link involves residue Lys259. Residue Lys266 forms a Glycyl lysine isopeptide (Lys-Gly) (interchain with G-Cter in SUMO); alternate linkage. A Glycyl lysine isopeptide (Lys-Gly) (interchain with G-Cter in SUMO2); alternate cross-link involves residue Lys266. Residues 333–403 enclose the PAS 2 domain; sequence QPANGEIRVK…CHRQVLQTRE (71 aa). Residues 367 to 375 carry the Nuclear export signal 2 motif; that stretch reads LAYLPQELL. The PAC domain occupies 408–451; sequence NCYKFKIKDGSFITLRSRWFSFMNPWTKEVEYIVSTNTVVLANV. Disordered regions lie at residues 465–498 and 517–601; these read PPHSMDSMLPSGEGGPKRTHPTVPGIPGGTRAGA and GSSP…SPSN. The interval 514 to 594 is interaction with CIART; the sequence is RIRGSSPSSC…IGIDMIDNDQ (81 aa). Low complexity predominate over residues 517–527; the sequence is GSSPSSCGSSP. The residue at position 544 (Lys544) is an N6-acetyllysine.

In terms of assembly, component of the circadian clock oscillator which includes the CRY1/2 proteins, CLOCK or NPAS2, BMAL1 or BMAL2, CSNK1D and/or CSNK1E, TIMELESS and the PER1/2/3 proteins. Forms a heterodimer with CLOCK. The CLOCK-BMAL1 heterodimer is required for E-box-dependent transactivation, for CLOCK nuclear translocation and degradation, and, for phosphorylation of both CLOCK and BMAL1. Part of a nuclear complex which also includes RACK1 and PRKCA; RACK1 and PRKCA are recruited to the complex in a circadian manner. Interacts with NPAS2. Interacts with EZH2. Interacts with SUMO3. Interacts with SIRT1. Interacts with AHR. Interacts with ID1, ID2 and ID3. Interacts with DDX4. Interacts with OGT. Interacts with EED and SUZ12. Interacts with MTA1. Interacts with CIART. Interacts with HSP90. Interacts with KAT2B and EP300. Interacts with BHLHE40/DEC1 and BHLHE41/DEC2. Interacts with RELB and the interaction is enhanced in the presence of CLOCK. Interacts with PER1, PER2, CRY1 and CRY2 and this interaction requires a translocation to the nucleus. Interaction of the CLOCK-BMAL1 heterodimer with PER or CRY inhibits transcription activation. Interaction of the CLOCK-BMAL1 with CRY1 is independent of DNA but with PER2 is off DNA. The CLOCK-BMAL1 heterodimer interacts with GSK3B. Interacts with KDM5A. Interacts with KMT2A; in a circadian manner. Interacts with UBE3A. Interacts with PRKCG. Interacts with MAGEL2. Interacts with NCOA2. Interacts with THRAP3. The CLOCK-BMAL1 heterodimer interacts with PASD1. Interacts with PASD1. Interacts with USP9X. Interacts with PIWIL2 (via PIWI domain). Interacts with HDAC3. Interacts with HNF4A. Post-translationally, ubiquitinated, leading to its proteasomal degradation. Deubiquitinated by USP9X. O-glycosylated; contains O-GlcNAc. O-glycosylation by OGT prevents protein degradation by inhibiting ubiquitination. It also stabilizes the CLOCK-BMAL1 heterodimer thereby increasing CLOCK-BMAL1-mediated transcription of genes in the negative loop of the circadian clock such as PER1/2/3 and CRY1/2. In terms of processing, acetylated on Lys-544 by CLOCK during the repression phase of the circadian cycle. Acetylation facilitates recruitment of CRY1 protein and initiates the repression phase of the circadian cycle. Acetylated at Lys-544 by KAT5 during the activation phase of the cycle, leading to recruitment of the positive transcription elongation factor b (P-TEFb) and BRD4, followed by productive elongation of circadian transcripts. Deacetylated by SIRT1, which may result in decreased protein stability. Post-translationally, phosphorylated upon dimerization with CLOCK. Phosphorylation enhances the transcriptional activity, alters the subcellular localization and decreases the stability of the CLOCK-BMAL1 heterodimer by promoting its degradation. Phosphorylation shows circadian variations in the liver with a peak between CT10 to CT14. Phosphorylation at Ser-97 by CK2 is essential for its nuclear localization, its interaction with CLOCK and controls CLOCK nuclear entry. Dephosphorylation at Ser-85 is important for dimerization with CLOCK and transcriptional activity. Sumoylated on Lys-266 upon dimerization with CLOCK. Predominantly conjugated to poly-SUMO2/3 rather than SUMO1 and the level of these conjugates undergo rhythmic variation, peaking at CT9-CT12. Sumoylation localizes it exclusively to the PML body and promotes its ubiquitination in the PML body, ubiquitin-dependent proteasomal degradation and the transcriptional activity of the CLOCK-BMAL1 heterodimer. In terms of processing, undergoes lysosome-mediated degradation in a time-dependent manner in the liver. As to expression, expressed in liver and testis (at protein level). Expressed in the suprachiasmatic nucleus (SCN) in a circadian manner.

It is found in the nucleus. The protein localises to the cytoplasm. Its subcellular location is the PML body. Its activity is regulated as follows. The redox state of the cell can modulate the transcriptional activity of the CLOCK-BMAL1 and NPAS2-BMAL1 heterodimers; NADH and NADPH enhance the DNA-binding activity of the heterodimers. Its function is as follows. Transcriptional activator which forms a core component of the circadian clock. The circadian clock, an internal time-keeping system, regulates various physiological processes through the generation of approximately 24 hour circadian rhythms in gene expression, which are translated into rhythms in metabolism and behavior. It is derived from the Latin roots 'circa' (about) and 'diem' (day) and acts as an important regulator of a wide array of physiological functions including metabolism, sleep, body temperature, blood pressure, endocrine, immune, cardiovascular, and renal function. Consists of two major components: the central clock, residing in the suprachiasmatic nucleus (SCN) of the brain, and the peripheral clocks that are present in nearly every tissue and organ system. Both the central and peripheral clocks can be reset by environmental cues, also known as Zeitgebers (German for 'timegivers'). The predominant Zeitgeber for the central clock is light, which is sensed by retina and signals directly to the SCN. The central clock entrains the peripheral clocks through neuronal and hormonal signals, body temperature and feeding-related cues, aligning all clocks with the external light/dark cycle. Circadian rhythms allow an organism to achieve temporal homeostasis with its environment at the molecular level by regulating gene expression to create a peak of protein expression once every 24 hours to control when a particular physiological process is most active with respect to the solar day. Transcription and translation of core clock components (CLOCK, NPAS2, BMAL1, BMAL2, PER1, PER2, PER3, CRY1 and CRY2) plays a critical role in rhythm generation, whereas delays imposed by post-translational modifications (PTMs) are important for determining the period (tau) of the rhythms (tau refers to the period of a rhythm and is the length, in time, of one complete cycle). A diurnal rhythm is synchronized with the day/night cycle, while the ultradian and infradian rhythms have a period shorter and longer than 24 hours, respectively. Disruptions in the circadian rhythms contribute to the pathology of cardiovascular diseases, cancer, metabolic syndromes and aging. A transcription/translation feedback loop (TTFL) forms the core of the molecular circadian clock mechanism. Transcription factors, CLOCK or NPAS2 and BMAL1 or BMAL2, form the positive limb of the feedback loop, act in the form of a heterodimer and activate the transcription of core clock genes and clock-controlled genes (involved in key metabolic processes), harboring E-box elements (5'-CACGTG-3') within their promoters. The core clock genes: PER1/2/3 and CRY1/2 which are transcriptional repressors form the negative limb of the feedback loop and interact with the CLOCK|NPAS2-BMAL1|BMAL2 heterodimer inhibiting its activity and thereby negatively regulating their own expression. This heterodimer also activates nuclear receptors NR1D1/2 and RORA/B/G, which form a second feedback loop and which activate and repress BMAL1 transcription, respectively. BMAL1 positively regulates myogenesis and negatively regulates adipogenesis via the transcriptional control of the genes of the canonical Wnt signaling pathway. Plays a role in normal pancreatic beta-cell function; regulates glucose-stimulated insulin secretion via the regulation of antioxidant genes NFE2L2/NRF2 and its targets SESN2, PRDX3, CCLC and CCLM. Negatively regulates the mTORC1 signaling pathway; regulates the expression of MTOR and DEPTOR. Controls diurnal oscillations of Ly6C inflammatory monocytes; rhythmic recruitment of the PRC2 complex imparts diurnal variation to chemokine expression that is necessary to sustain Ly6C monocyte rhythms. Regulates the expression of HSD3B2, STAR, PTGS2, CYP11A1, CYP19A1 and LHCGR in the ovary and also the genes involved in hair growth. Plays an important role in adult hippocampal neurogenesis by regulating the timely entry of neural stem/progenitor cells (NSPCs) into the cell cycle and the number of cell divisions that take place prior to cell-cycle exit. Regulates the circadian expression of CIART and KLF11. The CLOCK-BMAL1 heterodimer regulates the circadian expression of SERPINE1/PAI1, VWF, B3, CCRN4L/NOC, NAMPT, DBP, MYOD1, PPARGC1A, PPARGC1B, SIRT1, GYS2, F7, NGFR, GNRHR, BHLHE40/DEC1, ATF4, MTA1, KLF10 and also genes implicated in glucose and lipid metabolism. Promotes rhythmic chromatin opening, regulating the DNA accessibility of other transcription factors. May play a role in spermatogenesis; contributes to the chromatoid body assembly and physiology. The NPAS2-BMAL1 heterodimer positively regulates the expression of MAOA, F7 and LDHA and modulates the circadian rhythm of daytime contrast sensitivity by regulating the rhythmic expression of adenylate cyclase type 1 (ADCY1) in the retina. The preferred binding motif for the CLOCK-BMAL1 heterodimer is 5'-CACGTGA-3', which contains a flanking adenine nucleotide at the 3-prime end of the canonical 6-nucleotide E-box sequence. CLOCK specifically binds to the half-site 5'-CAC-3', while BMAL1 binds to the half-site 5'-GTGA-3'. The CLOCK-BMAL1 heterodimer also recognizes the non-canonical E-box motifs 5'-AACGTGA-3' and 5'-CATGTGA-3'. Essential for the rhythmic interaction of CLOCK with ASS1 and plays a critical role in positively regulating CLOCK-mediated acetylation of ASS1. Plays a role in protecting against lethal sepsis by limiting the expression of immune checkpoint protein CD274 in macrophages in a PKM2-dependent manner. Regulates the diurnal rhythms of skeletal muscle metabolism via transcriptional activation of genes promoting triglyceride synthesis (DGAT2) and metabolic efficiency (COQ10B). The sequence is that of Basic helix-loop-helix ARNT-like protein 1 (Bmal1) from Mus musculus (Mouse).